Here is a 101-residue protein sequence, read N- to C-terminus: Pro-corazonin (101 aa).

The first 19 residues, 1 to 19 (MVTNITLILTLMTLASVTA), serve as a signal peptide directing secretion. Position 20 is a pyrrolidone carboxylic acid (Gln20). Position 30 is an asparagine amide (Asn30).

The protein belongs to the corazonin family.

The protein localises to the secreted. Its function is as follows. Cardioactive peptide. Corazonin is probably involved in the physiological regulation of the heart beat. The polypeptide is Pro-corazonin (crz) (Bombyx mori (Silk moth)).